A 330-amino-acid polypeptide reads, in one-letter code: 7,8-didemethyl-8-hydroxy-5-deazariboflavin synthase (330 aa).

The region spanning 13-253 (VTFSKNAFIP…EDISIQVPPN (241 aa)) is the Radical SAM core domain. Residues C27, C31, and C34 each contribute to the [4Fe-4S] cluster site.

This sequence belongs to the radical SAM superfamily. CofG family. As to quaternary structure, consists of two subunits, CofG and CofH. Requires [4Fe-4S] cluster as cofactor.

It carries out the reaction 5-amino-5-(4-hydroxybenzyl)-6-(D-ribitylimino)-5,6-dihydrouracil + S-adenosyl-L-methionine = 7,8-didemethyl-8-hydroxy-5-deazariboflavin + 5'-deoxyadenosine + L-methionine + NH4(+) + H(+). The protein operates within cofactor biosynthesis; coenzyme F0 biosynthesis. Catalyzes the radical-mediated synthesis of 7,8-didemethyl-8-hydroxy-5-deazariboflavin from 5-amino-5-(4-hydroxybenzyl)-6-(D-ribitylimino)-5,6-dihydrouracil. This Methanococcus maripaludis (strain DSM 14266 / JCM 13030 / NBRC 101832 / S2 / LL) protein is 7,8-didemethyl-8-hydroxy-5-deazariboflavin synthase.